Reading from the N-terminus, the 289-residue chain is G1/S-specific cyclin-D2 (289 aa).

The region spanning 26–151 (VLQNLLTIEE…VVLGKLKWNL (126 aa)) is the Cyclin N-terminal domain. The segment at 264-289 (DQRDGSKSEDELDQASTPTDVRDIDL) is disordered. Ser-271 is subject to Phosphoserine. At Thr-280 the chain carries Phosphothreonine.

Belongs to the cyclin family. Cyclin D subfamily. In terms of assembly, interacts with either CDK4 or CDK6 protein kinase to form a serine/threonine kinase holoenzyme complex. The cyclin subunit imparts substrate specificity to the complex. Phosphorylation at Thr-280 by MAP kinases is required for ubiquitination and degradation by the DCX(AMBRA1) complex. In terms of processing, ubiquitinated by the DCX(AMBRA1) complex during the transition from G1 to S cell phase, leading to its degradation: ubiquitination is dependent on Thr-280 phosphorylation. The DCX(AMBRA1) complex represents the major regulator of CCND2 stability during the G1/S transition. Polyubiquitinated by the SCF(FBXL2) complex, leading to proteasomal degradation.

The protein resides in the nucleus. The protein localises to the cytoplasm. Its subcellular location is the nucleus membrane. Regulatory component of the cyclin D2-CDK4 (DC) complex that phosphorylates and inhibits members of the retinoblastoma (RB) protein family including RB1 and regulates the cell-cycle during G(1)/S transition. Phosphorylation of RB1 allows dissociation of the transcription factor E2F from the RB/E2F complex and the subsequent transcription of E2F target genes which are responsible for the progression through the G(1) phase. Hypophosphorylates RB1 in early G(1) phase. Cyclin D-CDK4 complexes are major integrators of various mitogenenic and antimitogenic signals. In Homo sapiens (Human), this protein is G1/S-specific cyclin-D2.